The primary structure comprises 917 residues: Isoleucine--tRNA ligase (917 aa).

A 'HIGH' region motif is present at residues 57-67 (PYANGNLHMGH). Residue E554 coordinates L-isoleucyl-5'-AMP. Positions 595–599 (KMSKS) match the 'KMSKS' region motif. K598 is an ATP binding site. 4 residues coordinate Zn(2+): C886, C889, C906, and C909.

It belongs to the class-I aminoacyl-tRNA synthetase family. IleS type 1 subfamily. In terms of assembly, monomer. Zn(2+) serves as cofactor.

The protein resides in the cytoplasm. The catalysed reaction is tRNA(Ile) + L-isoleucine + ATP = L-isoleucyl-tRNA(Ile) + AMP + diphosphate. Catalyzes the attachment of isoleucine to tRNA(Ile). As IleRS can inadvertently accommodate and process structurally similar amino acids such as valine, to avoid such errors it has two additional distinct tRNA(Ile)-dependent editing activities. One activity is designated as 'pretransfer' editing and involves the hydrolysis of activated Val-AMP. The other activity is designated 'posttransfer' editing and involves deacylation of mischarged Val-tRNA(Ile). This is Isoleucine--tRNA ligase from Staphylococcus aureus (strain Mu3 / ATCC 700698).